The chain runs to 217 residues: Large ribosomal subunit protein uL1 (217 aa).

S2 carries the N-acetylserine modification. The residue at position 11 (Y11) is a Phosphotyrosine. Residues K91 and K106 each carry the N6-acetyllysine modification. The residue at position 118 (K118) is an N6-acetyllysine; alternate. A Glycyl lysine isopeptide (Lys-Gly) (interchain with G-Cter in SUMO1); alternate cross-link involves residue K118. A Glycyl lysine isopeptide (Lys-Gly) (interchain with G-Cter in SUMO2); alternate cross-link involves residue K118. K161 participates in a covalent cross-link: Glycyl lysine isopeptide (Lys-Gly) (interchain with G-Cter in SUMO2).

This sequence belongs to the universal ribosomal protein uL1 family. Component of the large ribosomal subunit.

The protein localises to the cytoplasm. Functionally, component of the large ribosomal subunit. The ribosome is a large ribonucleoprotein complex responsible for the synthesis of proteins in the cell. In Mus musculus (Mouse), this protein is Large ribosomal subunit protein uL1 (Rpl10a).